A 392-amino-acid chain; its full sequence is Esterase EstB (392 aa).

Catalysis depends on serine 75, which acts as the Acyl-ester intermediate.

This sequence belongs to the class-A beta-lactamase family.

Its subcellular location is the cytoplasm. Strongly inhibited by eserin, NaF, HgCl2, SDS and Triton X-100. Its function is as follows. Acts on short-chain (C4-C6) fatty acid esters and triglycerides, including tertiary alcohol esters. Activity on p-nitrophenyl esters is generally higher than on o-nitrophenyl esters. Lacks beta-lactamase activity; it hydrolyzes the ester bond of cephalosporin substrates but there is no opening of the beta-lactam ring observed. This is Esterase EstB (estB) from Burkholderia gladioli (Pseudomonas marginata).